The chain runs to 100 residues: Putative antiporter subunit mnhF2 (100 aa).

A run of 3 helical transmembrane segments spans residues 6 to 26 (TNFF…IGLF), 38 to 58 (VVAF…VSVI), and 62 to 82 (VSFL…SVSI).

It belongs to the CPA3 antiporters (TC 2.A.63) subunit F family. As to quaternary structure, may form a heterooligomeric complex that consists of seven subunits: mnhA2, mnhB2, mnhC2, mnhD2, mnhE2, mnhF2 and mnhG2.

It is found in the cell membrane. This chain is Putative antiporter subunit mnhF2 (mnhF2), found in Staphylococcus haemolyticus (strain JCSC1435).